Consider the following 172-residue polypeptide: uncharacterized protein (172 aa).

A disordered region spans residues 22–64 (RSVSSSPAAKQPAPGTVAQSFPPGELALRDETGGRGRGTRGIR).

This is an uncharacterized protein from Human cytomegalovirus (strain AD169) (HHV-5).